Here is a 210-residue protein sequence, read N- to C-terminus: MKIVWCGHACFLVEDRGTKILIDPYPDVDEDRIGKVDYILVTHEHMDHYGKTPLIAKLSDAEVIGPKTVYLMAISDGLTKVREIEVGQEIELGDIRVRAFFTEHPTSQYPLGYLIEGSKRVAHLGDTYYSPAFTELRGKVDVLLVPIGGKSTASVREAADIVEMIRPRIAVPMHYGTYSEADPEEFKKELQKRRIWVLVKDLKPYEGFEI.

This sequence belongs to the UPF0173 family.

This chain is UPF0173 protein PF0020, found in Pyrococcus furiosus (strain ATCC 43587 / DSM 3638 / JCM 8422 / Vc1).